A 336-amino-acid polypeptide reads, in one-letter code: Uridine nucleosidase 1 (336 aa).

Active-site residues include D29 and H260.

The protein belongs to the IUNH family. In terms of assembly, homodimer. Component of the NSH heterocomplex made of URH1/NSH1 and URH2/NSH2 which exhibits strong xanthosine nucleosidase activity. Interacts with URH2. In terms of tissue distribution, expressed ubiquitously in leaves, flowers, stems, pollen cells, root tip meristem and root vasculature.

It localises to the cytoplasm. It carries out the reaction uridine + H2O = D-ribose + uracil. The enzyme catalyses xanthosine + H2O = D-ribose + xanthine. It catalyses the reaction inosine + H2O = hypoxanthine + D-ribose. The catalysed reaction is adenosine + H2O = D-ribose + adenine. In terms of biological role, involved in purine and pyrimidine breakdown rather than in pyrimidine salvage, especially in response to dark stress. Together with URH2, required for efficient inosine and xanthosine hydrolytic activities. Unable to use cytidine as a substrate. Can use uridine, inosine, adenosine as well as the cytokinin derivative isopentenyladenine-riboside as substrates. Also hydrolyzes xanthosine with high efficiency. This Arabidopsis thaliana (Mouse-ear cress) protein is Uridine nucleosidase 1.